The following is a 217-amino-acid chain: U exon protein (217 aa).

2 disordered regions span residues S68–G110 and E170–R217. A compositionally biased stretch (polar residues) spans G202 to R217.

It belongs to the adenoviridae U exon protein family.

It is found in the host nucleus. The protein resides in the host nucleoplasm. The protein localises to the host nucleolus. Might play a role in viral replication since it is associated with viral replication centers. Seems to have an effect on DBP localization. This chain is U exon protein, found in Homo sapiens (Human).